A 362-amino-acid chain; its full sequence is Mannose-1-phosphate guanyltransferase (362 aa).

This sequence belongs to the transferase hexapeptide repeat family.

It is found in the cytoplasm. It catalyses the reaction alpha-D-mannose 1-phosphate + GTP + H(+) = GDP-alpha-D-mannose + diphosphate. It functions in the pathway nucleotide-sugar biosynthesis; GDP-alpha-D-mannose biosynthesis; GDP-alpha-D-mannose from alpha-D-mannose 1-phosphate (GTP route): step 1/1. Involved in cell wall synthesis where it is required for glycosylation. Involved in cell cycle progression through cell-size checkpoint. The polypeptide is Mannose-1-phosphate guanyltransferase (MPG1) (Debaryomyces hansenii (strain ATCC 36239 / CBS 767 / BCRC 21394 / JCM 1990 / NBRC 0083 / IGC 2968) (Yeast)).